The sequence spans 301 residues: F-actin-capping protein subunit beta (301 aa).

Phosphoserine is present on S31. K264 bears the N6-acetyllysine mark.

This sequence belongs to the F-actin-capping protein beta subunit family. As to quaternary structure, component of the F-actin capping complex, composed of a heterodimer of an alpha and a beta subunit. Subunit of dynactin, a multiprotein complex part of a tripartite complex with dynein and a adapter, such as BICDL1, BICD2 or HOOK3. The dynactin complex is built around ACTR1A/ACTB filament and consists of an actin-related filament composed of a shoulder domain, a pointed end and a barbed end. Its length is defined by its flexible shoulder domain. The soulder is composed of 2 DCTN1 subunits, 4 DCTN2 and 2 DCTN3. The 4 DCNT2 (via N-terminus) bind the ACTR1A filament and act as molecular rulers to determine the length. The pointed end is important for binding dynein-dynactin cargo adapters. Consists of 4 subunits: ACTR10, DCNT4, DCTN5 and DCTN6. The barbed end is composed of a CAPZA1:CAPZB heterodimers, which binds ACTR1A/ACTB filament and dynactin and stabilizes dynactin. Interacts with ARHGAP17. Interaction with RCSD1/CAPZIP. Component of the WASH complex, composed of F-actin-capping protein subunit alpha (CAPZA1, CAPZA2 or CAPZA3), F-actin-capping protein subunit beta (CAPZB), WASH (WASHC1, WASH2P, WASH3P, WASH4P, WASH5P or WASH6P), WASHC2 (WASHC2A or WASHC2C), WASHC3, WASHC4 and WASHC5. Interacts with ACTG1. Directly interacts with CRACD; this interaction decreases binding to actin. As to expression, the isoform beta-3 is predominantly expressed in the testis. It is only detected in total sperm, sperm heads and the calyx fraction, but not in sperm tails or any supernatant fraction. Weaker expression also found in brain.

It localises to the cytoplasm. Its subcellular location is the cytoskeleton. It is found in the perinuclear theca. The protein localises to the calyx. In terms of biological role, F-actin-capping proteins bind in a Ca(2+)-independent manner to the fast growing ends of actin filaments (barbed end) thereby blocking the exchange of subunits at these ends. Unlike other capping proteins (such as gelsolin and severin), these proteins do not sever actin filaments. Plays a role in the regulation of cell morphology and cytoskeletal organization. Forms, with CAPZB, the barbed end of the fast growing ends of actin filaments in the dynactin complex and stabilizes dynactin structure. The dynactin multiprotein complex activates the molecular motor dynein for ultra-processive transport along microtubules. The polypeptide is F-actin-capping protein subunit beta (CAPZB) (Bos taurus (Bovine)).